Here is a 497-residue protein sequence, read N- to C-terminus: Uridine 5'-monophosphate synthase (497 aa).

The OPRTase stretch occupies residues Thr-8–Asn-226. The tract at residues Leu-227–Tyr-232 is domain linker. Positions Val-233 to Ser-496 are OMPdecase. UMP-binding positions include Asp-271 and Lys-293–His-295. Residue Lys-293 participates in orotidine 5'-phosphate binding. Active-site for OMPdecase activity residues include Asp-324, Lys-326, and Asp-329. Orotidine 5'-phosphate is bound by residues Lys-326, Asp-329, Thr-333, Ser-387, Gln-446 to Trp-448, and Gly-466 to Arg-467. Residues Asp-329, Thr-333, Ser-387, Gln-446–Trp-448, and Gly-466–Arg-467 contribute to the UMP site.

It in the N-terminal section; belongs to the purine/pyrimidine phosphoribosyltransferase family. In the C-terminal section; belongs to the OMP decarboxylase family. As to expression, expressed in intestine and in neurons near the nerve ring and rectum.

The protein localises to the cytoplasm. The catalysed reaction is orotidine 5'-phosphate + diphosphate = orotate + 5-phospho-alpha-D-ribose 1-diphosphate. The enzyme catalyses orotidine 5'-phosphate + H(+) = UMP + CO2. The protein operates within pyrimidine metabolism; UMP biosynthesis via de novo pathway; UMP from orotate: step 1/2. It functions in the pathway pyrimidine metabolism; UMP biosynthesis via de novo pathway; UMP from orotate: step 2/2. In terms of biological role, bifunctional enzyme which catalyzes the formation of UMP from orotate in the de novo pathway of pyrimidine biosynthesis. May also form UMP from uracil. Regulates the size of gut granules during embryonic development. Involved in resistance to DNA damaging agents including UV-C and X-ray radiation. The sequence is that of Uridine 5'-monophosphate synthase from Caenorhabditis elegans.